A 20-amino-acid polypeptide reads, in one-letter code: Glutathione S-transferase 2 (20 aa).

Residues 1–20 (GYKVTYFAIRGLAEPIXLLL) enclose the GST N-terminal domain. Tyrosine 6 lines the glutathione pocket.

Belongs to the GST superfamily. Sigma family.

It carries out the reaction RX + glutathione = an S-substituted glutathione + a halide anion + H(+). Conjugation of reduced glutathione to a wide number of exogenous and endogenous hydrophobic electrophiles. The chain is Glutathione S-transferase 2 (GST2) from Ascaris suum (Pig roundworm).